The chain runs to 67 residues: Guanine nucleotide-binding protein G(I)/G(S)/G(O) subunit gamma-13 (67 aa).

At C64 the chain carries Cysteine methyl ester. C64 carries S-farnesyl cysteine lipidation. Residues 65–67 (TIL) constitute a propeptide, removed in mature form.

This sequence belongs to the G protein gamma family. As to quaternary structure, g proteins are composed of 3 units, alpha, beta and gamma.

It localises to the cell membrane. Guanine nucleotide-binding proteins (G proteins) are involved as a modulator or transducer in various transmembrane signaling systems. The beta and gamma chains are required for the GTPase activity, for replacement of GDP by GTP, and for G protein-effector interaction. The sequence is that of Guanine nucleotide-binding protein G(I)/G(S)/G(O) subunit gamma-13 (GNG13) from Homo sapiens (Human).